Here is a 229-residue protein sequence, read N- to C-terminus: Secretory carrier-associated membrane protein 4 (229 aa).

Over 1–39 (MSEKENNFPPLPKFIPVKPCFYQNFSDEIPVEHQVLVKR) the chain is Cytoplasmic. 4 helical membrane passes run 40–60 (IYRL…ACLA), 61–81 (WWIG…LLLF), 105–125 (FMAF…QAIG), and 149–169 (VVML…AIAI). At 170 to 229 (MKVHRIYRGAGGSFQKAQTEWNTGTWRNPPSREAQYNNFSGNSLPEYPTVPSYPGSGQWP) the chain is on the cytoplasmic side. Thr194 carries the phosphothreonine modification. The tract at residues 208-229 (FSGNSLPEYPTVPSYPGSGQWP) is disordered.

The protein belongs to the SCAMP family.

Its subcellular location is the membrane. In terms of biological role, probably involved in membrane protein trafficking. In Homo sapiens (Human), this protein is Secretory carrier-associated membrane protein 4 (SCAMP4).